Consider the following 108-residue polypeptide: Bublin coiled-coil protein (108 aa).

Disordered regions lie at residues 1–23 and 67–108; these read MSGP…DDDF and RLEF…DEGS. Residues 25–73 are a coiled coil; the sequence is SEEYEAINSMLDQINSYLDDLEERNDSLNGKLHELMESNRQARLEFRAQ. Residues 99–108 show a composition bias toward basic and acidic residues; sequence ENDKKIDEGS.

This sequence belongs to the UPF0184 (EST00098) family.

The protein resides in the cell junction. It is found in the cytoplasm. Its subcellular location is the cytoskeleton. In terms of biological role, essential for intermediate filament organization in intestinal cells, interacts with intermediate filament and regulates intestinal lumen morphology. In Takifugu rubripes (Japanese pufferfish), this protein is Bublin coiled-coil protein (bbln).